The primary structure comprises 373 residues: Putative glutamate--cysteine ligase 2-1 (373 aa).

This sequence belongs to the glutamate--cysteine ligase type 2 family. YbdK subfamily.

The catalysed reaction is L-cysteine + L-glutamate + ATP = gamma-L-glutamyl-L-cysteine + ADP + phosphate + H(+). ATP-dependent carboxylate-amine ligase which exhibits weak glutamate--cysteine ligase activity. The chain is Putative glutamate--cysteine ligase 2-1 from Legionella pneumophila (strain Paris).